Consider the following 343-residue polypeptide: uncharacterized protein (343 aa).

11 helical membrane-spanning segments follow: residues 13 to 33, 44 to 64, 71 to 91, 121 to 141, 148 to 168, 177 to 197, 203 to 223, 244 to 264, 269 to 289, 296 to 316, and 320 to 340; these read VILYLVGHHLYLIPTTISMCG, LWGYISIITATIFFGISATLD, MHPVTIGAYTYIIAGIFLFFI, ILLLTALLSTVIAPLLFLTGL, NASLILNVEVLFIILLGYLIF, FLGIVLIILGAVYLLTEGDFS, VAVTGNFLVMAAAFFWSLDTV, VGGFVLLIIMLILGINTELPL, YALGVSVFSIGCSFILIYIAI, MVGALFPLSSLFGAIFAFIIL, and FSIMQGISGIVMLTGVFILYW. 2 EamA domains span residues 55-192 and 216-340; these read IFFG…YLLT and FFWS…ILYW.

This sequence belongs to the EamA transporter family.

Its subcellular location is the cell membrane. This is an uncharacterized protein from Methanothermobacter thermautotrophicus (strain ATCC 29096 / DSM 1053 / JCM 10044 / NBRC 100330 / Delta H) (Methanobacterium thermoautotrophicum).